The following is a 227-amino-acid chain: MSAISKNIIIINKPIKWTSNDVVQKVKRVIGAKKVGHAGTLDPNASGVLVLGINEGTKLLTKLILDNKSYIAEIKFGTSTNTYDAAGEIVSSTNRMVTLTEVTKIVKDFYKNDYWQKPPQFSALKINGQKAYVLARQKVDFEIAPRLVKIFKYQIMDFNYEKQILKISLHVSKGFYVRSFAVDLATKINNLAHLLTLIRTQSGPFEIKDAIEIEQVYDYWNNINKYL.

Aspartate 42 (nucleophile) is an active-site residue.

This sequence belongs to the pseudouridine synthase TruB family. Type 1 subfamily.

It catalyses the reaction uridine(55) in tRNA = pseudouridine(55) in tRNA. Its function is as follows. Responsible for synthesis of pseudouridine from uracil-55 in the psi GC loop of transfer RNAs. In Ureaplasma parvum serovar 3 (strain ATCC 27815 / 27 / NCTC 11736), this protein is tRNA pseudouridine synthase B.